A 684-amino-acid polypeptide reads, in one-letter code: UvrABC system protein B (684 aa).

Residues 32-420 (DGVLRGDRWQ…GGVVVEQLIR (389 aa)) enclose the Helicase ATP-binding domain. Residue 45 to 52 (GVTGSGKT) participates in ATP binding. A Beta-hairpin motif is present at residues 98-121 (YYDFYQPEAYIPSLDKYIAKDLKI). Residues 437-603 (QIDHLLARIR…SIIKSVDQVL (167 aa)) form the Helicase C-terminal domain. Residues 643–678 (MLMVAEMNAEMQKAAEQTDYEKAAYLRDEILMLQER) form the UVR domain.

This sequence belongs to the UvrB family. As to quaternary structure, forms a heterotetramer with UvrA during the search for lesions. Interacts with UvrC in an incision complex.

Its subcellular location is the cytoplasm. In terms of biological role, the UvrABC repair system catalyzes the recognition and processing of DNA lesions. A damage recognition complex composed of 2 UvrA and 2 UvrB subunits scans DNA for abnormalities. Upon binding of the UvrA(2)B(2) complex to a putative damaged site, the DNA wraps around one UvrB monomer. DNA wrap is dependent on ATP binding by UvrB and probably causes local melting of the DNA helix, facilitating insertion of UvrB beta-hairpin between the DNA strands. Then UvrB probes one DNA strand for the presence of a lesion. If a lesion is found the UvrA subunits dissociate and the UvrB-DNA preincision complex is formed. This complex is subsequently bound by UvrC and the second UvrB is released. If no lesion is found, the DNA wraps around the other UvrB subunit that will check the other stand for damage. The chain is UvrABC system protein B from Chlorobaculum tepidum (strain ATCC 49652 / DSM 12025 / NBRC 103806 / TLS) (Chlorobium tepidum).